Here is a 660-residue protein sequence, read N- to C-terminus: Threonine--tRNA ligase (660 aa).

Residues 1 to 49 (MPDSIVHVKKGQRFLDVIKDKNVVAVKIDSVLHDLRDVAERDVDAIPVS) form the TGS domain. The tract at residues 225–554 (DHRRIIAEMD…LLEHYAGKLP (330 aa)) is catalytic. Zn(2+)-binding residues include C318, H369, and H531.

This sequence belongs to the class-II aminoacyl-tRNA synthetase family. Homodimer. Zn(2+) is required as a cofactor.

The protein localises to the cytoplasm. The enzyme catalyses tRNA(Thr) + L-threonine + ATP = L-threonyl-tRNA(Thr) + AMP + diphosphate + H(+). Functionally, catalyzes the attachment of threonine to tRNA(Thr) in a two-step reaction: L-threonine is first activated by ATP to form Thr-AMP and then transferred to the acceptor end of tRNA(Thr). This chain is Threonine--tRNA ligase, found in Thermoplasma acidophilum (strain ATCC 25905 / DSM 1728 / JCM 9062 / NBRC 15155 / AMRC-C165).